Reading from the N-terminus, the 228-residue chain is UPF0758 protein CTC_02075 (228 aa).

Positions 106–228 constitute an MPN domain; the sequence is NITNPKDAAY…YISLKEKDIL (123 aa). The Zn(2+) site is built by histidine 177, histidine 179, and aspartate 190. Positions 177–190 match the JAMM motif motif; sequence HNHPSGDTTPSKED.

This sequence belongs to the UPF0758 family.

The protein is UPF0758 protein CTC_02075 of Clostridium tetani (strain Massachusetts / E88).